The sequence spans 516 residues: Cytochrome P450 1A2 (516 aa).

Residue S69 is glycosylated (O-linked (GlcNAc) serine). Residue F226 participates in substrate binding. C458 is a binding site for heme.

The protein belongs to the cytochrome P450 family. As to quaternary structure, interacts with PGRMC1; the interaction requires PGRMC1 homodimerization. The cofactor is heme.

It localises to the endoplasmic reticulum membrane. Its subcellular location is the microsome membrane. It catalyses the reaction an organic molecule + reduced [NADPH--hemoprotein reductase] + O2 = an alcohol + oxidized [NADPH--hemoprotein reductase] + H2O + H(+). The catalysed reaction is 17beta-estradiol + reduced [NADPH--hemoprotein reductase] + O2 = 2-hydroxy-17beta-estradiol + oxidized [NADPH--hemoprotein reductase] + H2O + H(+). It carries out the reaction 17beta-estradiol + reduced [NADPH--hemoprotein reductase] + O2 = 4-hydroxy-17beta-estradiol + oxidized [NADPH--hemoprotein reductase] + H2O + H(+). The enzyme catalyses estrone + reduced [NADPH--hemoprotein reductase] + O2 = 2-hydroxyestrone + oxidized [NADPH--hemoprotein reductase] + H2O + H(+). It catalyses the reaction estrone + reduced [NADPH--hemoprotein reductase] + O2 = 4-hydroxyestrone + oxidized [NADPH--hemoprotein reductase] + H2O + H(+). The catalysed reaction is cholesterol + reduced [NADPH--hemoprotein reductase] + O2 = 25-hydroxycholesterol + oxidized [NADPH--hemoprotein reductase] + H2O + H(+). It carries out the reaction all-trans-retinol + reduced [NADPH--hemoprotein reductase] + O2 = all-trans-retinal + oxidized [NADPH--hemoprotein reductase] + 2 H2O + H(+). The enzyme catalyses all-trans-retinal + reduced [NADPH--hemoprotein reductase] + O2 = all-trans-retinoate + oxidized [NADPH--hemoprotein reductase] + H2O + 2 H(+). It catalyses the reaction (5Z,8Z,11Z,14Z)-eicosatetraenoate + reduced [NADPH--hemoprotein reductase] + O2 = (14R,15S)-epoxy-(5Z,8Z,11Z)-eicosatrienoate + oxidized [NADPH--hemoprotein reductase] + H2O + H(+). The catalysed reaction is (5Z,8Z,11Z,14Z)-eicosatetraenoate + reduced [NADPH--hemoprotein reductase] + O2 = (14S,15R)-epoxy-(5Z,8Z,11Z)-eicosatrienoate + oxidized [NADPH--hemoprotein reductase] + H2O + H(+). It carries out the reaction (5Z,8Z,11Z,14Z,17Z)-eicosapentaenoate + reduced [NADPH--hemoprotein reductase] + O2 = (17R,18S)-epoxy-(5Z,8Z,11Z,14Z)-eicosatetraenoate + oxidized [NADPH--hemoprotein reductase] + H2O + H(+). The enzyme catalyses (4Z,7Z,10Z,13Z,16Z,19Z)-docosahexaenoate + reduced [NADPH--hemoprotein reductase] + O2 = (19R,20S)-epoxy-(4Z,7Z,10Z,13Z,16Z)-docosapentaenoate + oxidized [NADPH--hemoprotein reductase] + H2O + H(+). It catalyses the reaction (5S)-hydroperoxy-(6E,8Z,11Z,14Z)-eicosatetraenoate = 5-oxo-(6E,8Z,11Z,14Z)-eicosatetraenoate + H2O. The catalysed reaction is (12S)-hydroperoxy-(5Z,8Z,10E,14Z)-eicosatetraenoate = 12-oxo-(5Z,8Z,10E,14Z)-eicosatetraenoate + H2O. It carries out the reaction (15S)-hydroperoxy-(5Z,8Z,11Z,13E)-eicosatetraenoate = 15-oxo-(5Z,8Z,11Z,13E)-eicosatetraenoate + H2O. The enzyme catalyses (13S)-hydroperoxy-(9Z,11E)-octadecadienoate = 13-oxo-(9Z,11E)-octadecadienoate + H2O. It catalyses the reaction (5Z,8Z,11Z,14Z)-eicosatetraenoate + reduced [NADPH--hemoprotein reductase] + O2 = 13-hydroxy-(5Z,8Z,11Z,14Z)-eicosatetraenoate + oxidized [NADPH--hemoprotein reductase] + H2O + H(+). The catalysed reaction is (5Z,8Z,11Z,14Z)-eicosatetraenoate + reduced [NADPH--hemoprotein reductase] + O2 = 19-hydroxy-(5Z,8Z,11Z,14Z)-eicosatetraenoate + oxidized [NADPH--hemoprotein reductase] + H2O + H(+). It carries out the reaction (9Z,12Z)-octadecadienoate + reduced [NADPH--hemoprotein reductase] + O2 = 11-hydroxy-(9Z,12Z)-octadecadienoate + oxidized [NADPH--hemoprotein reductase] + H2O + H(+). It participates in cofactor metabolism; retinol metabolism. Its pathway is steroid metabolism; cholesterol metabolism. The protein operates within lipid metabolism; arachidonate metabolism. A cytochrome P450 monooxygenase involved in the metabolism of various endogenous substrates, including fatty acids, steroid hormones and vitamins. Mechanistically, uses molecular oxygen inserting one oxygen atom into a substrate, and reducing the second into a water molecule, with two electrons provided by NADPH via cytochrome P450 reductase (NADPH--hemoprotein reductase). Catalyzes the hydroxylation of carbon-hydrogen bonds. Exhibits high catalytic activity for the formation of hydroxyestrogens from estrone (E1) and 17beta-estradiol (E2), namely 2-hydroxy E1 and E2. Metabolizes cholesterol toward 25-hydroxycholesterol, a physiological regulator of cellular cholesterol homeostasis. May act as a major enzyme for all-trans retinoic acid biosynthesis in the liver. Catalyzes two successive oxidative transformation of all-trans retinol to all-trans retinal and then to the active form all-trans retinoic acid. Primarily catalyzes stereoselective epoxidation of the last double bond of polyunsaturated fatty acids (PUFA), displaying a strong preference for the (R,S) stereoisomer. Catalyzes bisallylic hydroxylation and omega-1 hydroxylation of PUFA. May also participate in eicosanoids metabolism by converting hydroperoxide species into oxo metabolites (lipoxygenase-like reaction, NADPH-independent). Plays a role in the oxidative metabolism of xenobiotics. Catalyzes the N-hydroxylation of heterocyclic amines and the O-deethylation of phenacetin. Metabolizes caffeine via N3-demethylation. The sequence is that of Cytochrome P450 1A2 (CYP1A2) from Macaca fuscata fuscata (Japanese macaque).